Consider the following 339-residue polypeptide: tRNA N6-adenosine threonylcarbamoyltransferase (339 aa).

Residues H107 and H111 each coordinate Fe cation. Substrate-binding positions include 129 to 133 (LVSGG), D162, G175, and N279. D307 contributes to the Fe cation binding site.

It belongs to the KAE1 / TsaD family. The cofactor is Fe(2+).

The protein resides in the cytoplasm. It carries out the reaction L-threonylcarbamoyladenylate + adenosine(37) in tRNA = N(6)-L-threonylcarbamoyladenosine(37) in tRNA + AMP + H(+). Functionally, required for the formation of a threonylcarbamoyl group on adenosine at position 37 (t(6)A37) in tRNAs that read codons beginning with adenine. Is involved in the transfer of the threonylcarbamoyl moiety of threonylcarbamoyl-AMP (TC-AMP) to the N6 group of A37, together with TsaE and TsaB. TsaD likely plays a direct catalytic role in this reaction. The protein is tRNA N6-adenosine threonylcarbamoyltransferase of Campylobacter curvus (strain 525.92).